We begin with the raw amino-acid sequence, 388 residues long: Lamin tail domain-containing protein 1 (388 aa).

The 119-residue stretch at 136-254 folds into the LTD domain; sequence EVGQFTSSSL…QAIAWYTPIH (119 aa). Residues 349–388 form a disordered region; sequence EPHNTSTAGGRLDRQPRTRSTRPNRASGSKKKKTSESQKQ. Residues 365 to 381 are compositionally biased toward basic residues; the sequence is RTRSTRPNRASGSKKKK.

The protein belongs to the intermediate filament family.

This chain is Lamin tail domain-containing protein 1 (LMNTD1), found in Homo sapiens (Human).